Here is a 244-residue protein sequence, read N- to C-terminus: Aspartate/glutamate leucyltransferase (244 aa).

It belongs to the R-transferase family. Bpt subfamily.

Its subcellular location is the cytoplasm. The enzyme catalyses N-terminal L-glutamyl-[protein] + L-leucyl-tRNA(Leu) = N-terminal L-leucyl-L-glutamyl-[protein] + tRNA(Leu) + H(+). It catalyses the reaction N-terminal L-aspartyl-[protein] + L-leucyl-tRNA(Leu) = N-terminal L-leucyl-L-aspartyl-[protein] + tRNA(Leu) + H(+). Functionally, functions in the N-end rule pathway of protein degradation where it conjugates Leu from its aminoacyl-tRNA to the N-termini of proteins containing an N-terminal aspartate or glutamate. The protein is Aspartate/glutamate leucyltransferase of Paramagnetospirillum magneticum (strain ATCC 700264 / AMB-1) (Magnetospirillum magneticum).